A 449-amino-acid chain; its full sequence is Probable glycosyltransferase 5 (449 aa).

Over residues 1-14 (MMEKHGGKVTSDRR) the composition is skewed to basic and acidic residues. The disordered stretch occupies residues 1–24 (MMEKHGGKVTSDRRAGRRQHGQRC). At 1-28 (MMEKHGGKVTSDRRAGRRQHGQRCSASD) the chain is on the cytoplasmic side. Residues 29–49 (AAPLVVVVILIVGALFLILGP) traverse the membrane as a helical; Signal-anchor for type II membrane protein segment. Topologically, residues 50-449 (TGSSSFTVPR…HPTFRAARPT (400 aa)) are lumenal. A disordered region spans residues 74–109 (APPPPPPPAQMQAGANASSEEDSGLPPPRQLTDPPY). N-linked (GlcNAc...) asparagine glycosylation is found at N89, N413, and N422.

The protein belongs to the glycosyltransferase 34 family.

The protein localises to the golgi apparatus membrane. Probable glycosyltransferase that may be involved in the biosynthesis of xyloglucan. This chain is Probable glycosyltransferase 5, found in Oryza sativa subsp. indica (Rice).